The primary structure comprises 323 residues: Annexin A5 (323 aa).

Annexin repeat units lie at residues 17 to 88 (FNDK…ALMV), 89 to 160 (PAHL…SLVQ), 172 to 244 (GQVE…AVVK), and 248 to 319 (SIQG…LLCG).

This sequence belongs to the annexin family.

Its function is as follows. Calcium/phospholipid-binding protein which promotes membrane fusion and is involved in exocytosis. The polypeptide is Annexin A5 (Cynops pyrrhogaster (Japanese fire-bellied newt)).